The chain runs to 320 residues: Esterase LipI (320 aa).

Catalysis depends on residues serine 165, aspartate 261, and histidine 291.

This sequence belongs to the 'GDXG' lipolytic enzyme family.

It carries out the reaction a fatty acid ester + H2O = an aliphatic alcohol + a fatty acid + H(+). The catalysed reaction is a butanoate ester + H2O = an aliphatic alcohol + butanoate + H(+). The enzyme catalyses an octanoate ester + H2O = an aliphatic alcohol + octanoate + H(+). It catalyses the reaction decanoate ester + H2O = decanoate + an aliphatic alcohol + H(+). It carries out the reaction an acetyl ester + H2O = an aliphatic alcohol + acetate + H(+). The catalysed reaction is a dodecanoate ester + H2O = an aliphatic alcohol + dodecanoate + H(+). Its activity is regulated as follows. Inhibited by ionic detergents SDS (anions) and CTAB (cationic). Strongly inhibited by Zn(2+). Functionally, esterase that can hydrolyze short-chain esters with the carbon chain containing 2 to 12 carbon atoms. In vitro, pNP-butyrate is the preferred substrate. This chain is Esterase LipI, found in Mycobacterium tuberculosis (strain ATCC 25618 / H37Rv).